The sequence spans 580 residues: Glypican-3 (580 aa).

Residues 1-24 form the signal peptide; sequence MAGTVRTACLVVAMLLSLDFPGQA. Q25 is subject to Pyrrolidone carboxylic acid. 7 disulfides stabilise this stretch: C35–C72, C65–C262, C73–C265, C197–C349, C252–C285, C274–C422, and C278–C410. N-linked (GlcNAc...) asparagine glycans are attached at residues N124 and N241. Phosphoserine is present on S352. Residue N418 is glycosylated (N-linked (GlcNAc...) asparagine). Residues S495 and S509 are each glycosylated (O-linked (Xyl...) (glycosaminoglycan) serine). Residue N554 is the site of GPI-anchor amidated asparagine attachment. Residues 555–580 constitute a propeptide, removed in mature form; it reads LGNVHSPLKLLTSMAISVVCFFFLVH.

The protein belongs to the glypican family. As to quaternary structure, heterodimer; disulfide-linked. Cleavage by a furin-like convertase results in production of alpha and beta chains which form a disulfide-linked heterodimer. Interacts with DPP4. Interacts with FGF2. Interacts with WNT5A. Also interacts with WNT3A and WNT7B. Interacts with hedgehog protein SHH; the heparan sulfate chains are not required for the interaction. Also interacts with hedgehog protein IHH. Interacts with CD81. Interacts with Wnt receptors FZD4, FZD7 and FZD8; the heparan sulfate chains are required for the interaction. O-glycosylated; contains heparan sulfate and/or chondroitin sulfate. Post-translationally, cleaved intracellularly by a furin-like convertase to generate 2 subunits, alpha and beta, which remain associated through disulfide bonds and are associated with the cell surface via the GPI-anchor. This processing is essential for its role in inhibition of hedgehog signaling. A second proteolytic event may result in cleavage of the protein on the cell surface, separating it from the GPI-anchor and leading to its shedding from the cell surface.

It localises to the cell membrane. Cell surface proteoglycan. Negatively regulates the hedgehog signaling pathway when attached via the GPI-anchor to the cell surface by competing with the hedgehog receptor PTC1 for binding to hedgehog proteins. Binding to the hedgehog protein SHH triggers internalization of the complex by endocytosis and its subsequent lysosomal degradation. Positively regulates the canonical Wnt signaling pathway by binding to the Wnt receptor Frizzled and stimulating the binding of the Frizzled receptor to Wnt ligands. Positively regulates the non-canonical Wnt signaling pathway. Binds to CD81 which decreases the availability of free CD81 for binding to the transcriptional repressor HHEX, resulting in nuclear translocation of HHEX and transcriptional repression. Inhibits the dipeptidyl peptidase activity of DPP4. Plays a role in limb patterning and skeletal development by controlling the cellular response to BMP4. Modulates the effects of growth factors BMP2, BMP7 and FGF7 on renal branching morphogenesis. Required for coronary vascular development. Plays a role in regulating cell movements during gastrulation. This is Glypican-3 (GPC3) from Pan troglodytes (Chimpanzee).